The chain runs to 596 residues: Nuclear receptor subfamily 2 group C member 2 (596 aa).

Phosphoserine; by MAPK is present on serine 19. Serine 46 is modified (phosphoserine). Residues serine 55 and serine 68 each carry the phosphoserine; by MAPK modification. Phosphoserine is present on serine 98. Positions 114–189 form a DNA-binding region, nuclear receptor; sequence VEYCVVCGDK…MGMKMESVQS (76 aa). NR C4-type zinc fingers lie at residues 117 to 137 and 153 to 177; these read CVVC…CEGC and CRSS…LKKC. A Glycyl lysine isopeptide (Lys-Gly) (interchain with G-Cter in SUMO2) cross-link involves residue lysine 192. A Phosphoserine modification is found at serine 219. Lysine 231 bears the N6-acetyllysine mark. The NR LBD domain maps to 341–583; it reads GSIHVISRDQ…SIIPYILKME (243 aa).

The protein belongs to the nuclear hormone receptor family. NR2 subfamily. In terms of assembly, homodimer; can bind DNA as homodimer. Heterodimer; binds DNA as a heterodimer with NR2C1 required for chromatin remodeling and for binding to promoter regions such as globin DR1 repeats. Interacts with NR2C2AP; the interaction represses selective NR2C2-mediated transcriptional activity. Interacts with PCAF; the interaction preferentially occurs on the non-phosphorylated form and induces NR2C2-mediated transactivation activity and does not require the ligand-binding domain. Interacts (MAPK-mediated phosphorylated form) with NRIP1; the interaction promotes repression of NR2C2-mediated activity. Interacts with NLRP10. Interacts (via ligand-binding region) with transcriptional corepressor JAZF1; the interaction promotes NR2C2-mediated transcriptional repression. Post-translationally, phosphorylation on Ser-19 and Ser-68 is an important regulator of NR2C2-mediated transcriptional activity. Phosphorylation on these residues recruits the corepressor, NRIP1, leading to transcripional repression, whereas the non-phosphorylated form preferentially recruits the coactivator, PCAF. Expressed in hepatocytes. Also expressed in granule cells of the hippocampus and the cerebellum.

The protein localises to the nucleus. Functionally, orphan nuclear receptor that can act as a repressor or activator of transcription. An important repressor of nuclear receptor signaling pathways such as retinoic acid receptor, retinoid X, vitamin D3 receptor, thyroid hormone receptor and estrogen receptor pathways. May regulate gene expression during the late phase of spermatogenesis. Activates transcriptional activity of LHCG and is antagonist of PPARA-mediated transactivation. Together with NR2C1, forms the core of the DRED (direct repeat erythroid-definitive) complex that represses embryonic and fetal globin transcription including that of GATA1. Binds to hormone response elements (HREs) consisting of two 5'-AGGTCA-3' half site direct repeat consensus sequences. Plays a fundamental role in early embryonic development and embryonic stem cells. Required for normal spermatogenesis and cerebellum development. Appears to be important for neurodevelopmentally regulated behavior. This Rattus norvegicus (Rat) protein is Nuclear receptor subfamily 2 group C member 2 (Nr2c2).